We begin with the raw amino-acid sequence, 398 residues long: Na(+)/H(+) antiporter NhaA (398 aa).

11 helical membrane-spanning segments follow: residues 21–41, 66–86, 101–121, 132–152, 161–181, 184–204, 216–236, 274–294, 305–325, 343–363, and 374–394; these read LGGY…NSPL, VLHW…GLEI, IVLP…VYLL, GWAI…ALLG, IFLT…IAVF, AELN…LCVL, LLVG…ATLA, LLIV…GMGI, IALG…WLAI, GVAL…ALAF, and IGVL…LRVL.

Belongs to the NhaA Na(+)/H(+) (TC 2.A.33) antiporter family.

It is found in the cell inner membrane. It catalyses the reaction Na(+)(in) + 2 H(+)(out) = Na(+)(out) + 2 H(+)(in). Na(+)/H(+) antiporter that extrudes sodium in exchange for external protons. The sequence is that of Na(+)/H(+) antiporter NhaA from Bordetella bronchiseptica (strain ATCC BAA-588 / NCTC 13252 / RB50) (Alcaligenes bronchisepticus).